The sequence spans 1099 residues: Probable inorganic carbon transporter subunit DabA (1099 aa).

The disordered stretch occupies residues 175 to 194 (RQGRRRFATTERRTRRTRRS). The span at 176–194 (QGRRRFATTERRTRRTRRS) shows a compositional bias: basic residues. Zn(2+)-binding residues include C514, D516, H722, and C737. The interval 1071-1099 (AGAGAAQPTRDAIELPEQASGPLPARDGQ) is disordered.

It belongs to the inorganic carbon transporter (TC 9.A.2) DabA family. Forms a complex with DabB. The cofactor is Zn(2+).

The protein resides in the cell membrane. Part of an energy-coupled inorganic carbon pump. The protein is Probable inorganic carbon transporter subunit DabA of Parafrankia sp. (strain EAN1pec).